The primary structure comprises 1659 residues: Fatty acid synthase subunit alpha (1659 aa).

The disordered stretch occupies residues 114 to 139 (TQAQASGGAGTIAGAGSSTAPVTAPP). A Carrier domain is found at 160–235 (AQAFEIVRTL…AALQKTFTGQ (76 aa)). S195 carries the O-(pantetheine 4'-phosphoryl)serine modification. The ketoreductase (KR) domain stretch occupies residues 588 to 826 (GRSVLITGAG…LCLMFNTMCS (239 aa)). Positions 1030–1575 (KQLLHEVLIQ…QKGAQTIVVH (546 aa)) constitute a Ketosynthase family 3 (KS3) domain. Residues C1217, H1458, and H1499 each act as for beta-ketoacyl synthase activity in the active site. Residues 1631–1659 (ETLLDPTPPQTNVDDRVARSIVQQESAEP) form a disordered region.

This sequence belongs to the thiolase-like superfamily. Fungal fatty acid synthetase subunit alpha family. In terms of assembly, [Alpha(6)beta(6)] hexamers of two multifunctional subunits (alpha and beta). 4'-phosphopantetheine is transferred from CoA to a specific serine of the acyl carrier domain by the C-terminal PPT domain. This modification is essential for activity because fatty acids are bound in thioester linkage to the sulfhydryl of the prosthetic group.

It catalyses the reaction acetyl-CoA + n malonyl-CoA + 2n NADPH + 4n H(+) = a long-chain-acyl-CoA + n CoA + n CO2 + 2n NADP(+).. It carries out the reaction a fatty acyl-[ACP] + malonyl-[ACP] + H(+) = a 3-oxoacyl-[ACP] + holo-[ACP] + CO2. The enzyme catalyses a (3R)-hydroxyacyl-[ACP] + NADP(+) = a 3-oxoacyl-[ACP] + NADPH + H(+). It functions in the pathway secondary metabolite biosynthesis. In terms of biological role, fatty acid synthase subunit alpha; part of the gene cluster that mediates the biosynthesis of aspercryptins, linear lipopeptides built from six amino acids including 2 highly unusual and nonproteogenic amino acids, 2-amino-octanoic acid (2aoa) and 2-amino-dodecanol (2adol). The core structure of aspercryptins is as follows: Ser/Ala-Thr-Ile/Val-2aoa-Asn-2adol. The first step of aspercryptin biosynthesis is the generation of the fatty acid precursors, octanoic and dodecanoic acids, by the FAS subunits atnF and atnM. The fatty acid precursors are likely transformed into the corresponding alpha-amino fatty acids in three steps. First, they are hydroxylated by the cytochrome P450 monooxygenase atnE, then oxidized to the corresponding alpha-keto acids by the NAD(P)-dependent oxidoreductase atnD, and finally converted to the alpha-amino fatty acids by the PLP-dependent aminotransferases atnH or atnJ. the alpha-amino fatty acids, 2-amino-octanoic and 2-amino-dodecanoic acids, are recognized, activated, and covalently tethered to the NRPS atnA by its fourth and sixth adenylation domains. The second module of atnA is the Thr module and contains an epimerase (E) domain responsible for the epimerization of Thr to D-allo-Thr. Additionally, despite atnA having only one epimerase domain, the first amino acid of aspercryptin A1 is D-Ser, suggesting that serine is either loaded directly as D-Ser on the first module or that the epimerase domain in the threonine module epimerizes both L-Ser and L-Thr. After condensation of the hexapeptide of aspercryptin, the C-terminal reductase (TE) domain might be involved in the reductive release and production of the aldehyde hexapeptide. Further reduction would generate aspercryptins. The variety of aspercryptins produced reflects the flexibility of the atnA NRPS, allowing incorporation of alanine instead of serine, valine for isoleucine, and a C10 fatty amino alcohol instead of the C12 version. AtnB seems to be involved in the selectivity for Ile versus Val by the third module. Moreover, type B, C and D aspercryptins have an additional N-terminal cichorine, acetyl and propionyl group respectively. The polypeptide is Fatty acid synthase subunit alpha (Emericella nidulans (strain FGSC A4 / ATCC 38163 / CBS 112.46 / NRRL 194 / M139) (Aspergillus nidulans)).